A 473-amino-acid polypeptide reads, in one-letter code: Cucurbitadienol 11-hydroxylase (473 aa).

A helical membrane pass occupies residues 4–24; the sequence is VVLGLATLFVAYYIHWINKWR. Cys422 provides a ligand contact to heme.

It belongs to the cytochrome P450 family. It depends on heme as a cofactor. In terms of tissue distribution, highly expressed in young fruits 15 days after anthesis (15-DAA). Also observed in roots.

Its subcellular location is the membrane. The enzyme catalyses cucurbitadienol + 2 reduced [NADPH--hemoprotein reductase] + 2 O2 = 11-oxocucurbitadienol + 2 oxidized [NADPH--hemoprotein reductase] + 3 H2O + 2 H(+). It carries out the reaction cucurbitadienol + reduced [NADPH--hemoprotein reductase] + O2 = 11-hydroxycucurbitadienol + oxidized [NADPH--hemoprotein reductase] + H2O + H(+). It catalyses the reaction 11-hydroxycucurbitadienol + reduced [NADPH--hemoprotein reductase] + O2 = 11-oxocucurbitadienol + oxidized [NADPH--hemoprotein reductase] + 2 H2O + H(+). The catalysed reaction is (24R)-24,25-dihydroxycucurbitadienol + reduced [NADPH--hemoprotein reductase] + O2 = mogrol + oxidized [NADPH--hemoprotein reductase] + H2O + H(+). Its pathway is secondary metabolite biosynthesis; terpenoid biosynthesis. Functionally, hydroxylase involved in the biosynthesis of cucurbitacin and mogroside tetracyclic triterpene natural products (e.g. siamenoside I and mogrosides IV, V and VI). Cucurbitacins have cytotoxic properties and exhibit deterrent taste as a defense barrier against herbivores. Mogrosides are nonsugar highly oxygenated compounds used as high-intensity zero-calorie sweeteners; they also possess pharmacological properties such as regulating immunity, lowering blood sugar and lipid levels, protecting the liver, and acting as antioxidants and antitumor agents. Catalyzes the oxidation of cucurbitadienol at the C-11 position to produce 11-oxocucurbitadienol, a possible biosynthetic intermediate from cucurbitadienol to mogrol. Also mediates the conversion of 24,25-dihydroxycucurbitadienol to mogrol. This is Cucurbitadienol 11-hydroxylase from Siraitia grosvenorii (Monk's fruit).